The sequence spans 446 residues: D-inositol 3-phosphate glycosyltransferase (446 aa).

A disordered region spans residues 1-21 (MSHYVGRLGRRSPAGSGRLRL). His-34 provides a ligand contact to 1D-myo-inositol 3-phosphate. Residues 40–41 (QP) and Gly-48 contribute to the UDP-N-acetyl-alpha-D-glucosamine site. Residues 45 to 50 (DAGGMN), Lys-103, Tyr-136, Thr-160, and Arg-180 contribute to the 1D-myo-inositol 3-phosphate site. Positions 255, 260, and 321 each coordinate UDP-N-acetyl-alpha-D-glucosamine. Phe-330, Arg-331, and Ala-333 together coordinate Mg(2+). Residues Glu-343 and Glu-351 each coordinate UDP-N-acetyl-alpha-D-glucosamine. Thr-357 provides a ligand contact to Mg(2+).

It belongs to the glycosyltransferase group 1 family. MshA subfamily. As to quaternary structure, homodimer.

The enzyme catalyses 1D-myo-inositol 3-phosphate + UDP-N-acetyl-alpha-D-glucosamine = 1D-myo-inositol 2-acetamido-2-deoxy-alpha-D-glucopyranoside 3-phosphate + UDP + H(+). Catalyzes the transfer of a N-acetyl-glucosamine moiety to 1D-myo-inositol 3-phosphate to produce 1D-myo-inositol 2-acetamido-2-deoxy-glucopyranoside 3-phosphate in the mycothiol biosynthesis pathway. This is D-inositol 3-phosphate glycosyltransferase from Streptomyces scabiei (strain 87.22).